The primary structure comprises 156 residues: Cytochrome c-type biogenesis protein CcmE 2 (156 aa).

Residues methionine 1–arginine 8 are Cytoplasmic-facing. A helical; Signal-anchor for type II membrane protein transmembrane segment spans residues leucine 9–alanine 29. Over leucine 30 to glutamine 156 the chain is Periplasmic. Heme-binding residues include histidine 123 and tyrosine 127. The disordered stretch occupies residues methionine 136–glutamine 156.

This sequence belongs to the CcmE/CycJ family.

The protein resides in the cell inner membrane. In terms of biological role, heme chaperone required for the biogenesis of c-type cytochromes. Transiently binds heme delivered by CcmC and transfers the heme to apo-cytochromes in a process facilitated by CcmF and CcmH. The protein is Cytochrome c-type biogenesis protein CcmE 2 of Xanthomonas axonopodis pv. citri (strain 306).